Consider the following 193-residue polypeptide: Cyanate hydratase (193 aa).

Catalysis depends on residues arginine 121, glutamate 124, and serine 147.

Belongs to the cyanase family.

The catalysed reaction is cyanate + hydrogencarbonate + 3 H(+) = NH4(+) + 2 CO2. Functionally, catalyzes the reaction of cyanate with bicarbonate to produce ammonia and carbon dioxide. The sequence is that of Cyanate hydratase from Phaeodactylum tricornutum (strain CCAP 1055/1).